Reading from the N-terminus, the 117-residue chain is Holo-[acyl-carrier-protein] synthase (117 aa).

The Mg(2+) site is built by aspartate 8 and glutamate 58.

It belongs to the P-Pant transferase superfamily. AcpS family. Mg(2+) is required as a cofactor.

It is found in the cytoplasm. It catalyses the reaction apo-[ACP] + CoA = holo-[ACP] + adenosine 3',5'-bisphosphate + H(+). In terms of biological role, transfers the 4'-phosphopantetheine moiety from coenzyme A to a Ser of acyl-carrier-protein. In Enterococcus faecalis (strain ATCC 700802 / V583), this protein is Holo-[acyl-carrier-protein] synthase.